A 285-amino-acid polypeptide reads, in one-letter code: Transcription initiation factor IIE subunit beta (285 aa).

Polar residues-rich tracts occupy residues 1 to 10 (MSSLSDQLSS) and 33 to 44 (TPTAYLNSNDGH). The segment at 1–56 (MSSLSDQLSSFKKKVANQPIYAKPQPRQPASPTPTAYLNSNDGHSSAASSPGSYSL) is disordered. The span at 45-55 (SSAASSPGSYS) shows a compositional bias: low complexity. The segment at residues 67–142 (YSQPADSGVG…FTFKPLHNIR (76 aa)) is a DNA-binding region (TFIIE beta). Positions 240 to 272 (PTSVDPSTVKRAGHNQTPKQKKPKTRRGKITNT) are disordered. The span at 258-268 (KQKKPKTRRGK) shows a compositional bias: basic residues.

It belongs to the TFIIE beta subunit family. In terms of assembly, TFIIE is a tetramer of two alpha (tfa1) and two beta (tfa2) subunits. TFIIE associates with RNA polymerase II via the beta subunit.

The protein localises to the nucleus. Functionally, recruits TFIIH to the initiation complex and stimulates the RNA polymerase II C-terminal domain kinase and DNA-dependent ATPase activities of TFIIH. Both TFIIH and TFIIE are required for promoter clearance by RNA polymerase. This chain is Transcription initiation factor IIE subunit beta (tfa2), found in Schizosaccharomyces pombe (strain 972 / ATCC 24843) (Fission yeast).